A 103-amino-acid polypeptide reads, in one-letter code: Small ribosomal subunit protein eS24 (103 aa).

The protein belongs to the eukaryotic ribosomal protein eS24 family.

This chain is Small ribosomal subunit protein eS24, found in Methanococcus maripaludis (strain C6 / ATCC BAA-1332).